The sequence spans 211 residues: Urease accessory protein UreF (211 aa).

The disordered stretch occupies residues 68–93 (LAPDGADRETDARTPSPAARDASRSQ).

The protein belongs to the UreF family. As to quaternary structure, ureD, UreF and UreG form a complex that acts as a GTP-hydrolysis-dependent molecular chaperone, activating the urease apoprotein by helping to assemble the nickel containing metallocenter of UreC. The UreE protein probably delivers the nickel.

Its subcellular location is the cytoplasm. In terms of biological role, required for maturation of urease via the functional incorporation of the urease nickel metallocenter. In Mycobacterium marinum (strain ATCC BAA-535 / M), this protein is Urease accessory protein UreF.